The primary structure comprises 383 residues: MEKINDKMAKLTIKRLSPEEEFPDLSQHNNHMAKVLTQDMYTKLRDRATPNGFTIDGVIQTGIDNPGHPFIMTVGCVAGDEETYEVFKELLDPIIEDRHGGYKPTDKHKTDLNPDNLKGGDDLDPNYVISSRVRTGRSIRGFCLPPHCSRGERRGVEKMSVEALDSLSGDLKGKYYALKNMTDAEQQQLIDDHFLFDKPVSPLLLASGMARDWPDGRGIWHNDTKTFLVWVNEEDHLRVISMQKGGNMKEVFNRFCTGLTKIETLFKDKGTSFMWNEHLGYVLTCPSNLGTGLRAGVHVKIPNISKHAKFEEVLKRLRLQKRGTGGVDTAAVGGTFDISNADRLGFSEVELVQMVVDGVKLLVEMEKKLEKGQSIDDLMPAQK.

In terms of domain architecture, Phosphagen kinase N-terminal spans 14-100 (KRLSPEEEFP…LDPIIEDRHG (87 aa)). The segment covering 99–112 (HGGYKPTDKHKTDL) has biased composition (basic and acidic residues). Positions 99–119 (HGGYKPTDKHKTDLNPDNLKG) are disordered. The region spanning 127–369 (YVISSRVRTG…KLLVEMEKKL (243 aa)) is the Phosphagen kinase C-terminal domain. ATP contacts are provided by residues 130–134 (SSRVR), H193, R238, R294, 322–327 (RGTGGV), and D337.

This sequence belongs to the ATP:guanido phosphotransferase family. As to expression, exists in many tissues, but preferentially in testis.

The catalysed reaction is creatine + ATP = N-phosphocreatine + ADP + H(+). Reversibly catalyzes the transfer of phosphate between ATP and various phosphogens (e.g. creatine phosphate). Creatine kinase isoenzymes play a central role in energy transduction in tissues with large, fluctuating energy demands, such as skeletal muscle, heart, brain and spermatozoa. The chain is Creatine kinase, testis isozyme (tck1) from Oncorhynchus mykiss (Rainbow trout).